We begin with the raw amino-acid sequence, 240 residues long: NADH-quinone oxidoreductase subunit C (240 aa).

Positions 1-82 (MSEEEKPKPK…PVDENRDPEP (82 aa)) are disordered. A compositionally biased stretch (low complexity) spans 11–20 (LSPALAAKMA). Residues 67-82 (DKPKAEPVDENRDPEP) are compositionally biased toward basic and acidic residues.

Belongs to the complex I 30 kDa subunit family. As to quaternary structure, NDH-1 is composed of 14 different subunits. Subunits NuoB, C, D, E, F, and G constitute the peripheral sector of the complex.

The protein localises to the cell inner membrane. The enzyme catalyses a quinone + NADH + 5 H(+)(in) = a quinol + NAD(+) + 4 H(+)(out). NDH-1 shuttles electrons from NADH, via FMN and iron-sulfur (Fe-S) centers, to quinones in the respiratory chain. The immediate electron acceptor for the enzyme in this species is believed to be a menaquinone. Couples the redox reaction to proton translocation (for every two electrons transferred, four hydrogen ions are translocated across the cytoplasmic membrane), and thus conserves the redox energy in a proton gradient. The chain is NADH-quinone oxidoreductase subunit C from Chloroherpeton thalassium (strain ATCC 35110 / GB-78).